Here is a 342-residue protein sequence, read N- to C-terminus: Ketol-acid reductoisomerase (NADP(+)) (342 aa).

A KARI N-terminal Rossmann domain is found at 2–182 (AEIYYDNDAD…GGLRAGGIKT (181 aa)). Residues 25–28 (YGSQ), lysine 48, serine 51, serine 53, and 83–86 (DQVQ) each bind NADP(+). The active site involves histidine 108. Glycine 134 contacts NADP(+). Residues 183-328 (TFTEETETDL…RELRKLFAWN (146 aa)) form the KARI C-terminal knotted domain. 4 residues coordinate Mg(2+): aspartate 191, glutamate 195, glutamate 227, and glutamate 231. Serine 252 lines the substrate pocket.

It belongs to the ketol-acid reductoisomerase family. Requires Mg(2+) as cofactor.

It catalyses the reaction (2R)-2,3-dihydroxy-3-methylbutanoate + NADP(+) = (2S)-2-acetolactate + NADPH + H(+). It carries out the reaction (2R,3R)-2,3-dihydroxy-3-methylpentanoate + NADP(+) = (S)-2-ethyl-2-hydroxy-3-oxobutanoate + NADPH + H(+). It functions in the pathway amino-acid biosynthesis; L-isoleucine biosynthesis; L-isoleucine from 2-oxobutanoate: step 2/4. It participates in amino-acid biosynthesis; L-valine biosynthesis; L-valine from pyruvate: step 2/4. In terms of biological role, involved in the biosynthesis of branched-chain amino acids (BCAA). Catalyzes an alkyl-migration followed by a ketol-acid reduction of (S)-2-acetolactate (S2AL) to yield (R)-2,3-dihydroxy-isovalerate. In the isomerase reaction, S2AL is rearranged via a Mg-dependent methyl migration to produce 3-hydroxy-3-methyl-2-ketobutyrate (HMKB). In the reductase reaction, this 2-ketoacid undergoes a metal-dependent reduction by NADPH to yield (R)-2,3-dihydroxy-isovalerate. The protein is Ketol-acid reductoisomerase (NADP(+)) of Leifsonia xyli subsp. xyli (strain CTCB07).